Here is a 364-residue protein sequence, read N- to C-terminus: Autophagy-related protein 5 (364 aa).

Over residues 1 to 13 (MASPNPYSYSPQL) the composition is skewed to polar residues. Residues 1–103 (MASPNPYSYS…SLPPKPKPSS (103 aa)) form a disordered region. Residues 28–42 (SSPSFRSTPFRSSRG) are compositionally biased toward low complexity. Gly residues predominate over residues 43–53 (TGAGTGIGLGL). The segment covering 72-82 (RSGDGSHDDLP) has biased composition (basic and acidic residues). A Glycyl lysine isopeptide (Lys-Gly) (interchain with G-Cter in ATG12) cross-link involves residue lysine 202. The segment at 262–306 (PSSPSPPSSDQQQPQRPGGSSSSGSYRVMQTLVPPRGPNNRTPQT) is disordered. The segment covering 269–286 (SSDQQQPQRPGGSSSSGS) has biased composition (low complexity).

This sequence belongs to the ATG5 family. Conjugated with atg12. Conjugated to atg12; which is essential for autophagy.

Its subcellular location is the preautophagosomal structure membrane. Functionally, involved in cytoplasm to vacuole transport (Cvt) and autophagic vesicle formation. Autophagy is essential for maintenance of amino acid levels and protein synthesis under nitrogen starvation. Required for selective autophagic degradation of the nucleus (nucleophagy). Also required for mitophagy, which eliminates defective or superfluous mitochondria in order to fulfill cellular energy requirements and prevent excess ROS production. Conjugation with atg12, through a ubiquitin-like conjugating system involving apg-5/atg7 as an E1-like activating enzyme and atg10 as an E2-like conjugating enzyme, is essential for its function. The atg12-apg-4/atg5 conjugate acts as an E3-like enzyme which is required for lipidation of apg-6/atg8 and apg-6/atg8 association to the vesicle membranes. The protein is Autophagy-related protein 5 (apg-4) of Neurospora crassa (strain ATCC 24698 / 74-OR23-1A / CBS 708.71 / DSM 1257 / FGSC 987).